Here is a 386-residue protein sequence, read N- to C-terminus: Bifunctional enzyme IspD/IspF (386 aa).

Residues 1–231 (MKNGAVIIPA…REKKEPMQKI (231 aa)) form a 2-C-methyl-D-erythritol 4-phosphate cytidylyltransferase region. The segment at 232–386 (RIGHGFDAHQ…SCHAVVLLQQ (155 aa)) is 2-C-methyl-D-erythritol 2,4-cyclodiphosphate synthase. A divalent metal cation contacts are provided by aspartate 238 and histidine 240. Residues 238–240 (DAH) and 264–265 (HS) contribute to the 4-CDP-2-C-methyl-D-erythritol 2-phosphate site. Histidine 272 serves as a coordination point for a divalent metal cation. Residues 286–288 (DIG), 362–365 (TTTE), tyrosine 369, and arginine 372 contribute to the 4-CDP-2-C-methyl-D-erythritol 2-phosphate site.

This sequence in the N-terminal section; belongs to the IspD/TarI cytidylyltransferase family. IspD subfamily. The protein in the C-terminal section; belongs to the IspF family. A divalent metal cation is required as a cofactor.

The enzyme catalyses 2-C-methyl-D-erythritol 4-phosphate + CTP + H(+) = 4-CDP-2-C-methyl-D-erythritol + diphosphate. It carries out the reaction 4-CDP-2-C-methyl-D-erythritol 2-phosphate = 2-C-methyl-D-erythritol 2,4-cyclic diphosphate + CMP. The protein operates within isoprenoid biosynthesis; isopentenyl diphosphate biosynthesis via DXP pathway; isopentenyl diphosphate from 1-deoxy-D-xylulose 5-phosphate: step 2/6. Its pathway is isoprenoid biosynthesis; isopentenyl diphosphate biosynthesis via DXP pathway; isopentenyl diphosphate from 1-deoxy-D-xylulose 5-phosphate: step 4/6. Bifunctional enzyme that catalyzes the formation of 4-diphosphocytidyl-2-C-methyl-D-erythritol from CTP and 2-C-methyl-D-erythritol 4-phosphate (MEP) (IspD), and catalyzes the conversion of 4-diphosphocytidyl-2-C-methyl-D-erythritol 2-phosphate (CDP-ME2P) to 2-C-methyl-D-erythritol 2,4-cyclodiphosphate (ME-CPP) with a corresponding release of cytidine 5-monophosphate (CMP) (IspF). This Desulfotalea psychrophila (strain LSv54 / DSM 12343) protein is Bifunctional enzyme IspD/IspF.